Consider the following 93-residue polypeptide: YcgL domain-containing protein KPN78578_22820 (93 aa).

Positions 1–85 constitute a YcgL domain; it reads MFCVIYRSTK…PSENLLKKHL (85 aa).

This chain is YcgL domain-containing protein KPN78578_22820, found in Klebsiella pneumoniae subsp. pneumoniae (strain ATCC 700721 / MGH 78578).